The following is a 331-amino-acid chain: Pyruvate dehydrogenase E1 component subunit beta (331 aa).

Glu-60 lines the thiamine diphosphate pocket. The K(+) site is built by Leu-113, Ala-161, Ile-162, Asp-164, and Asn-166.

As to quaternary structure, heterodimer of an alpha and a beta chain. Requires thiamine diphosphate as cofactor.

The protein localises to the plastid. The protein resides in the chloroplast. The catalysed reaction is N(6)-[(R)-lipoyl]-L-lysyl-[protein] + pyruvate + H(+) = N(6)-[(R)-S(8)-acetyldihydrolipoyl]-L-lysyl-[protein] + CO2. Functionally, the pyruvate dehydrogenase complex catalyzes the overall conversion of pyruvate to acetyl-CoA and CO(2). It contains multiple copies of three enzymatic components: pyruvate dehydrogenase (E1), dihydrolipoamide acetyltransferase (E2) and lipoamide dehydrogenase (E3). The sequence is that of Pyruvate dehydrogenase E1 component subunit beta (pdhB) from Porphyra purpurea (Red seaweed).